The following is a 525-amino-acid chain: DNA damage-binding protein CMR1 (525 aa).

Disordered stretches follow at residues 38-86 and 212-233; these read AGIF…AESE and GILDASQQPDQNESDEEDEYPD. The segment covering 53–62 has biased composition (basic residues); the sequence is TKKKPAPKRV. WD repeat units follow at residues 183–224, 241–281, 288–328, 339–379, 384–425, 448–491, and 494–525; these read ITRE…DQNE, PHTN…ATEA, SDDE…KANP, LSEK…TKHP, EHES…KDWK, GKWV…LAQL, and DVITAVPAVAVFHRTQNWVVGGTGSAKVCLWM. Acidic residues predominate over residues 223-232; sequence NESDEEDEYP.

It belongs to the WD repeat DDB2/WDR76 family.

DNA-binding protein that binds to both single- and double-stranded DNA. Binds preferentially to UV-damaged DNA. May be involved in DNA-metabolic processes. This is DNA damage-binding protein CMR1 from Coccidioides immitis (strain RS) (Valley fever fungus).